A 149-amino-acid chain; its full sequence is uncharacterized protein (149 aa).

Positions 1-149 (MNIRQAKTSD…VHYCLNVPAK (149 aa)) constitute an N-acetyltransferase domain.

This sequence belongs to the acetyltransferase family.

This is an uncharacterized protein from Bacillus subtilis (strain 168).